A 130-amino-acid polypeptide reads, in one-letter code: MSMQDPIADMLTRIRNGQAANKTAVSMPSSKLKVAIANLLKEEGFIEDYKVEGDTKPTLELVLKYFQGKPVVETIQRISRPGLRIYKKKDALPKVMAGMGIAVISTSKGVMTDRAARQAGLGGEIICYVA.

The protein belongs to the universal ribosomal protein uS8 family. In terms of assembly, part of the 30S ribosomal subunit. Contacts proteins S5 and S12.

One of the primary rRNA binding proteins, it binds directly to 16S rRNA central domain where it helps coordinate assembly of the platform of the 30S subunit. This is Small ribosomal subunit protein uS8 from Sodalis glossinidius (strain morsitans).